The following is a 197-amino-acid chain: DnaJ homolog subfamily C member 5 (197 aa).

A J domain is found at 13 to 82 (GESLYHVLGL…RNIYDKYGSL (70 aa)). Residues 153 to 197 (EDLEAQMQSDERDTEGPVLVQPASATETTQLTSDSHASYHTDGFN) form a disordered region. A compositionally biased stretch (polar residues) spans 175–197 (ASATETTQLTSDSHASYHTDGFN).

In terms of processing, palmitoylated. Palmitoylation occurs probably in the cysteine-rich domain and regulates DNAJC5 stable membrane attachment.

The protein localises to the cytoplasm. Its subcellular location is the cytosol. It is found in the membrane. The protein resides in the cytoplasmic vesicle. It localises to the secretory vesicle. The protein localises to the chromaffin granule membrane. Its subcellular location is the melanosome. It is found in the cell membrane. Its function is as follows. May have an important role in presynaptic function. May be involved in calcium-dependent neurotransmitter release at nerve endings. In Xenopus laevis (African clawed frog), this protein is DnaJ homolog subfamily C member 5.